Reading from the N-terminus, the 20-residue chain is Catechol 1,2-dioxygenase (20 aa).

It belongs to the intradiol ring-cleavage dioxygenase family. Homodimer which dissociates into active monomeric subunits at high ionic strengths. Fe(3+) is required as a cofactor.

It carries out the reaction catechol + O2 = cis,cis-muconate + 2 H(+). It participates in aromatic compound metabolism; beta-ketoadipate pathway; 5-oxo-4,5-dihydro-2-furylacetate from catechol: step 1/3. The sequence is that of Catechol 1,2-dioxygenase from Acinetobacter radioresistens.